Here is a 122-residue protein sequence, read N- to C-terminus: C-C motif chemokine 9 (122 aa).

The first 21 residues, 1-21, serve as a signal peptide directing secretion; that stretch reads MKPFHTALSFLILTTALGIWA. 3 disulfide bridges follow: C57–C80, C58–C96, and C67–C107.

This sequence belongs to the intercrine beta (chemokine CC) family. In terms of processing, the N-terminal is proteolytically cleaved by proteases associated with inflammatory responses. The processed forms CCL9(29-101), CCL9(30-101) and CCL9(31-101) exhibit increase in CCR1-mediated signaling and chemotaxis assays in vitro. Expressed mainly in the liver, lung, and the thymus, although some expression has been detected in a wide variety of tissues except brain.

The protein resides in the secreted. Its function is as follows. Monokine with inflammatory, pyrogenic and chemokinetic properties. Circulates at high concentrations in the blood of healthy animals. Binding to a high-affinity receptor activates calcium release in neutrophils. It also inhibits colony formation of bone marrow myeloid immature progenitors. The protein is C-C motif chemokine 9 (Ccl9) of Mus musculus (Mouse).